Here is a 167-residue protein sequence, read N- to C-terminus: Crossover junction endodeoxyribonuclease RuvC (167 aa).

Catalysis depends on residues aspartate 14, glutamate 75, and aspartate 147. Residues aspartate 14, glutamate 75, and aspartate 147 each coordinate Mg(2+).

The protein belongs to the RuvC family. In terms of assembly, homodimer which binds Holliday junction (HJ) DNA. The HJ becomes 2-fold symmetrical on binding to RuvC with unstacked arms; it has a different conformation from HJ DNA in complex with RuvA. In the full resolvosome a probable DNA-RuvA(4)-RuvB(12)-RuvC(2) complex forms which resolves the HJ. It depends on Mg(2+) as a cofactor.

The protein resides in the cytoplasm. The enzyme catalyses Endonucleolytic cleavage at a junction such as a reciprocal single-stranded crossover between two homologous DNA duplexes (Holliday junction).. The RuvA-RuvB-RuvC complex processes Holliday junction (HJ) DNA during genetic recombination and DNA repair. Endonuclease that resolves HJ intermediates. Cleaves cruciform DNA by making single-stranded nicks across the HJ at symmetrical positions within the homologous arms, yielding a 5'-phosphate and a 3'-hydroxyl group; requires a central core of homology in the junction. The consensus cleavage sequence is 5'-(A/T)TT(C/G)-3'. Cleavage occurs on the 3'-side of the TT dinucleotide at the point of strand exchange. HJ branch migration catalyzed by RuvA-RuvB allows RuvC to scan DNA until it finds its consensus sequence, where it cleaves and resolves the cruciform DNA. This Synechocystis sp. (strain ATCC 27184 / PCC 6803 / Kazusa) protein is Crossover junction endodeoxyribonuclease RuvC.